The primary structure comprises 141 residues: Hemoglobin subunit alpha-A (141 aa).

A Globin domain is found at 1 to 141 (VLSASDKANV…VGTVLTAKYR (141 aa)). Histidine 58 is a binding site for O2. Residue histidine 87 coordinates heme b.

Belongs to the globin family. As to quaternary structure, heterotetramer of two alpha chains and two beta chains. Red blood cells.

Its function is as follows. Involved in oxygen transport from the lung to the various peripheral tissues. This Sturnus vulgaris (Starling) protein is Hemoglobin subunit alpha-A (HBAA).